Consider the following 250-residue polypeptide: tRNA (guanine-N(1)-)-methyltransferase (250 aa).

S-adenosyl-L-methionine-binding positions include Gly113 and Ile133 to Leu138.

The protein belongs to the RNA methyltransferase TrmD family. Homodimer.

It is found in the cytoplasm. It catalyses the reaction guanosine(37) in tRNA + S-adenosyl-L-methionine = N(1)-methylguanosine(37) in tRNA + S-adenosyl-L-homocysteine + H(+). Functionally, specifically methylates guanosine-37 in various tRNAs. The polypeptide is tRNA (guanine-N(1)-)-methyltransferase (Photorhabdus laumondii subsp. laumondii (strain DSM 15139 / CIP 105565 / TT01) (Photorhabdus luminescens subsp. laumondii)).